We begin with the raw amino-acid sequence, 581 residues long: Proline--tRNA ligase (581 aa).

Belongs to the class-II aminoacyl-tRNA synthetase family. ProS type 1 subfamily. As to quaternary structure, homodimer.

It is found in the cytoplasm. It carries out the reaction tRNA(Pro) + L-proline + ATP = L-prolyl-tRNA(Pro) + AMP + diphosphate. In terms of biological role, catalyzes the attachment of proline to tRNA(Pro) in a two-step reaction: proline is first activated by ATP to form Pro-AMP and then transferred to the acceptor end of tRNA(Pro). As ProRS can inadvertently accommodate and process non-cognate amino acids such as alanine and cysteine, to avoid such errors it has two additional distinct editing activities against alanine. One activity is designated as 'pretransfer' editing and involves the tRNA(Pro)-independent hydrolysis of activated Ala-AMP. The other activity is designated 'posttransfer' editing and involves deacylation of mischarged Ala-tRNA(Pro). The misacylated Cys-tRNA(Pro) is not edited by ProRS. The sequence is that of Proline--tRNA ligase from Chlamydia trachomatis serovar A (strain ATCC VR-571B / DSM 19440 / HAR-13).